The following is a 425-amino-acid chain: MPDNNLEILFQHDPAMAEIIQGELQRQRDHLELIASENFTSEAVLAAQGSVLTNKYAEGLPKKRYYGGCEYIDRAEQLAIDRAKELFGAAHANVQPHSGAQANFAVFLALLSPGDTIMGMDLSHGGHLTHGSPVNVSGKWFKVCHYGVNPDTERLDYDQIRELALKERPKLLICGYSAYPRIIEFDKFRAIADEIGAYLMADIAHIAGLVATGHHPSPISYCDVVTTTTHKTLRGPRGGLILTRDADLGKQFDKAVFPGTQGGPLEHVIAAKGVAFGEALKPQFKAYSGQVIANSRALAAQLMERGFKLVSGGTDNHLMLVDLRSIGMTGKEADRLVSEINITANKNTVPFDPESPFVTSGLRLGSPALTTRGMGESEFKEIGNIIADYLLSRGDEAVKHDCLGRVKSLCDRFPLYPGMKMAALV.

(6S)-5,6,7,8-tetrahydrofolate contacts are provided by residues Leu-122 and 126–128; that span reads GHL. N6-(pyridoxal phosphate)lysine is present on Lys-231. 355–357 contacts (6S)-5,6,7,8-tetrahydrofolate; that stretch reads SPF.

This sequence belongs to the SHMT family. As to quaternary structure, homodimer. Requires pyridoxal 5'-phosphate as cofactor.

The protein resides in the cytoplasm. The catalysed reaction is (6R)-5,10-methylene-5,6,7,8-tetrahydrofolate + glycine + H2O = (6S)-5,6,7,8-tetrahydrofolate + L-serine. The protein operates within one-carbon metabolism; tetrahydrofolate interconversion. It functions in the pathway amino-acid biosynthesis; glycine biosynthesis; glycine from L-serine: step 1/1. Functionally, catalyzes the reversible interconversion of serine and glycine with tetrahydrofolate (THF) serving as the one-carbon carrier. This reaction serves as the major source of one-carbon groups required for the biosynthesis of purines, thymidylate, methionine, and other important biomolecules. Also exhibits THF-independent aldolase activity toward beta-hydroxyamino acids, producing glycine and aldehydes, via a retro-aldol mechanism. This is Serine hydroxymethyltransferase from Rippkaea orientalis (strain PCC 8801 / RF-1) (Cyanothece sp. (strain PCC 8801)).